The following is a 677-amino-acid chain: Potassium channel KAT1 (677 aa).

Over Met1–Glu63 the chain is Cytoplasmic. The chain crosses the membrane as a helical span at residues Met64–Ile84. Residues Thr85–Ala90 lie on the Extracellular side of the membrane. The helical transmembrane segment at Ile91–Phe111 threads the bilayer. Residues Val112 to Leu134 are Cytoplasmic-facing. A helical transmembrane segment spans residues Ser135–Phe155. Over Asn156–Arg165 the chain is Extracellular. A helical; Voltage-sensor membrane pass occupies residues Ile166 to Glu186. Topologically, residues Lys187–Lys200 are cytoplasmic. Residues Leu201 to Asp221 form a helical membrane-spanning segment. Over Arg222–Val248 the chain is Extracellular. Residues Thr249 to Ala268 constitute an intramembrane region (pore-forming). Residues Glu269–Arg272 lie on the Extracellular side of the membrane. The chain crosses the membrane as a helical span at residues Glu273 to Gly293. Topologically, residues Asn294 to Asn677 are cytoplasmic. An a nucleoside 3',5'-cyclic phosphate-binding site is contributed by Leu377–Lys496. Over residues Ile568–Ser577 the composition is skewed to basic and acidic residues. A disordered region spans residues Ile568–Gln601. The region spanning Arg612 to Asn677 is the KHA domain.

It belongs to the potassium channel family. Plant (TC 1.A.1.4) subfamily. As to quaternary structure, the potassium channel is probably composed of a homo- or heterotetrameric complex of pore-forming subunits. May interact with AKT2 and KAT2. Interacts with SLAC1 and SLAH3. Expressed in guard cells, and in roots.

The protein resides in the membrane. Highly selective inward-rectifying potassium channel. This voltage-gated channel could mediate long-term potassium influx into guard cells leading to stomatal opening. Assuming opened or closed conformations in response to the voltage difference across the membrane, the channel is activated by hyperpolarization. The channel activity is enhanced upon external acidification. Also permeable to ammonium ions. Blocked by tetraethylammonium and barium ions. The chain is Potassium channel KAT1 (KAT1) from Arabidopsis thaliana (Mouse-ear cress).